The primary structure comprises 359 residues: RNA-binding protein 4B (359 aa).

2 RRM domains span residues 2–72 (VKLF…ASKN) and 78–148 (TKLH…LSTS). The CCHC-type zinc-finger motif lies at 160–177 (SGCYRCGKEGHWSKECPV). An interaction with TNPO3 region spans residues 196 to 359 (AVRPPYTMGY…YVDRARYSAF (164 aa)).

Interacts with TNPO3, which may mediate nuclear import of the protein.

The protein resides in the nucleus. Its subcellular location is the nucleolus. In terms of biological role, required for the translational activation of PER1 mRNA in response to circadian clock. Binds directly to the 3'-UTR of the PER1 mRNA. The polypeptide is RNA-binding protein 4B (RBM4B) (Sus scrofa (Pig)).